The primary structure comprises 111 residues: Large ribosomal subunit protein eL31 (111 aa).

The protein belongs to the eukaryotic ribosomal protein eL31 family.

The polypeptide is Large ribosomal subunit protein eL31 (RPL31) (Encephalitozoon cuniculi (strain GB-M1) (Microsporidian parasite)).